The primary structure comprises 388 residues: Spermidine/putrescine import ATP-binding protein PotA (388 aa).

An ABC transporter domain is found at 17–247 (IEIDHVTKRF…PATVFVANFI (231 aa)). 49–56 (GPSGCGKT) lines the ATP pocket.

This sequence belongs to the ABC transporter superfamily. Spermidine/putrescine importer (TC 3.A.1.11.1) family. The complex is composed of two ATP-binding proteins (PotA), two transmembrane proteins (PotB and PotC) and a solute-binding protein (PotD).

Its subcellular location is the cell membrane. It catalyses the reaction ATP + H2O + polyamine-[polyamine-binding protein]Side 1 = ADP + phosphate + polyamineSide 2 + [polyamine-binding protein]Side 1.. Its function is as follows. Part of the ABC transporter complex PotABCD involved in spermidine/putrescine import. Responsible for energy coupling to the transport system. This is Spermidine/putrescine import ATP-binding protein PotA from Mycobacterium sp. (strain KMS).